An 89-amino-acid chain; its full sequence is Small ribosomal subunit protein uS15 (89 aa).

This sequence belongs to the universal ribosomal protein uS15 family. As to quaternary structure, part of the 30S ribosomal subunit. Forms a bridge to the 50S subunit in the 70S ribosome, contacting the 23S rRNA.

One of the primary rRNA binding proteins, it binds directly to 16S rRNA where it helps nucleate assembly of the platform of the 30S subunit by binding and bridging several RNA helices of the 16S rRNA. In terms of biological role, forms an intersubunit bridge (bridge B4) with the 23S rRNA of the 50S subunit in the ribosome. In Lactococcus lactis subsp. lactis (strain IL1403) (Streptococcus lactis), this protein is Small ribosomal subunit protein uS15.